The primary structure comprises 448 residues: Deoxyguanosinetriphosphate triphosphohydrolase-like protein (448 aa).

Residues 67 to 260 (RLTHSLEVSQ…MELADDIAYG (194 aa)) form the HD domain.

Belongs to the dGTPase family. Type 2 subfamily.

This is Deoxyguanosinetriphosphate triphosphohydrolase-like protein from Aliivibrio fischeri (strain ATCC 700601 / ES114) (Vibrio fischeri).